The primary structure comprises 567 residues: MINSVGVVRKEAENCNCLQVFFVSGSFKVDSVEAKKKEENFRETLRDMANSKYEYVKSFELEDEVMLPNLMVVRIDGRDFSRFSQVHEFEKPNDETALNLMNSCSAAVLEEFPDIIFAYGYSDEYSFVFKKTSRFYQRRASKILSLVASFFAAVYVTKWKEFFPQRKLLYAPSFSSKVVSCASAEVLQAYLAWRQQDCHANNQYDTCFWMLVKSGKSVSETQEILKDTQKQQKNELLFQKFGINYKTLPELFRQGSCLFKKKVEETVKHDENGNPVKRLRRKAVFVHSENIAGRSFWNEQPSLYNDLGHFTKDIGKIEPDFIRSFQFENKLLPLTWVVVRIDGCHFHRFSDVHEFEKPNDEQALKLMNSCAVAVLEEFEDIHFAYGVSDEYSFVLKKESELYKRQSSKIISAVASFFTSTYVLQWGEFFPHKELKYPPSFDGRAVCYPTYNILLDYLAWRQVDCHINNQYNTCFWMLVKSGKNKTQSQDYLKGTQTREKNELLSRQFGIEYNSLPVIFRMGSSVFRLKEAENGVVSGKKLEGEVVVDHCNIIERCFWEEHLHILSYS.

Mg(2+)-binding residues include Asp342, Gly343, and Asp389. GTP-binding positions include 342 to 347 (DGCHFH) and 388 to 389 (SD). Glycyl lysine isopeptide (Lys-Gly) (interchain with G-Cter in ubiquitin) cross-links involve residues Lys397 and Lys403.

Belongs to the tRNA(His) guanylyltransferase family. Requires Mg(2+) as cofactor.

The protein resides in the nucleus. It localises to the nucleoplasm. It carries out the reaction a 5'-end ribonucleotide-tRNA(His) + GTP + ATP + H2O = a 5'-end phospho-guanosine-ribonucleotide-tRNA(His) + AMP + 2 diphosphate + H(+). Its function is as follows. Adds a GMP to the 5'-end of tRNA(His) after transcription and RNase P cleavage. In Arabidopsis thaliana (Mouse-ear cress), this protein is tRNA(His) guanylyltransferase 1 (THG1).